The sequence spans 278 residues: Proline-rich 28 kDa antigen homolog (278 aa).

The signal sequence occupies residues 1–28 (MIQSTQTWRVLAGGLAATAMGVTVFAGG).

This sequence to M.tuberculosis Rv0040c.

The chain is Proline-rich 28 kDa antigen homolog from Mycobacterium leprae (strain TN).